Here is a 390-residue protein sequence, read N- to C-terminus: Leucine aminopeptidase 1 (390 aa).

Residues 1 to 18 (MKLSTALVLGATATGAWS) form the signal peptide. The propeptide occupies 19 to 90 (YAIPQLEQEV…FPTLDAGSYV (72 aa)). The N-linked (GlcNAc...) asparagine glycan is linked to N120. Zn(2+)-binding residues include H190, D209, E248, and D275. C324 and C328 are joined by a disulfide. H357 is a Zn(2+) binding site.

Belongs to the peptidase M28 family. M28E subfamily. In terms of assembly, monomer. The cofactor is Zn(2+).

The protein resides in the secreted. In terms of biological role, extracellular aminopeptidase that allows assimilation of proteinaceous substrates. The polypeptide is Leucine aminopeptidase 1 (lap1) (Emericella nidulans (strain FGSC A4 / ATCC 38163 / CBS 112.46 / NRRL 194 / M139) (Aspergillus nidulans)).